A 726-amino-acid chain; its full sequence is Pyrroloquinoline quinone-dependent pyranose dehydrogenase (726 aa).

An N-terminal signal peptide occupies residues 1 to 18 (MRSSSLAWALGLVALANA). Positions 83 and 108 each coordinate heme b. An intrachain disulfide couples Cys-138 to Cys-141. Residue Asn-140 is glycosylated (N-linked (GlcNAc...) asparagine). The heme b site is built by Arg-181 and His-182. A disordered region spans residues 211-242 (PPLSGGAPTQPPTQQPPTTTAPPPPPPSSTFV). Residues 219–238 (TQPPTQQPPTTTAPPPPPPS) show a composition bias toward pro residues. A disulfide bridge links Cys-244 with Cys-302. The pyrroloquinoline quinone site is built by Arg-273, His-363, Arg-430, and Asn-431. Residues Ser-449 and Asp-451 each coordinate Ca(2+). A disulfide bridge connects residues Cys-492 and Cys-525. Residue His-539 participates in pyrroloquinoline quinone binding. N-linked (GlcNAc...) asparagine glycosylation is present at Asn-551. Pyrroloquinoline quinone-binding residues include His-560, Trp-563, and Asn-564. A disulfide bridge connects residues Cys-611 and Cys-619. Arg-621 lines the pyrroloquinoline quinone pocket. Over residues 659-678 (ITQPPITTSPPTPTTPPVVQ) the composition is skewed to pro residues. The segment at 659 to 689 (ITQPPITTSPPTPTTPPVVQPPTTVAPPQAS) is disordered. Residues 679-689 (PPTTVAPPQAS) are compositionally biased toward low complexity. Residues 688-724 (ASQTLWGQCGGQGWTGPTLCPANSVCRESNQWYSQCV) enclose the CBM1 domain.

The protein belongs to the sugar dehydrogenase AA12 family. Ca(2+) is required as a cofactor. Requires pyrroloquinoline quinone as cofactor. The cofactor is heme b.

Its subcellular location is the secreted. In terms of biological role, pyrroloquinoline quinone (PPQ)-dependent oxidoreductase that catalyzes the oxidation of various sugars including L-galactose, L-gulose, D-talose, D-arabinose, D-lyxose, L-fucose and D-glucosone. Shows significant activity toward the reverse-chair conformation of pyranoses. Shows little or no activity toward abundant sugars such as D-glucose, D-fructose, cellobiose, as well L-xylose and L-glucose. This enzyme is able to direct electrical communication with electrodes, without artificial electron mediators, thus allowing direct electron transfer (DET)-type bioelectrocatalysis. Exhibits binding affinity for insoluble cellulose. PDH does not oxidize cello-oligosaccharides but is able to activate the C-1-oxidizing Neurospora crassa LPMO9F and the C-4-oxidizing Neurospora crassa LPMO9C thanks to the electron-tranfer activity of the cytochrome domain and the localization of PDH in the vicinity of the LPMO substrates by the CBM1 domain. The protein is Pyrroloquinoline quinone-dependent pyranose dehydrogenase of Coprinopsis cinerea (strain Okayama-7 / 130 / ATCC MYA-4618 / FGSC 9003) (Inky cap fungus).